The sequence spans 382 residues: Tuliposide A-converting enzyme 2, chloroplastic (382 aa).

The transit peptide at 1–74 (MSVASFFSSL…PSPSLSPTPT (74 aa)) directs the protein to the chloroplast. Ser232 functions as the Acyl-ester intermediate in the catalytic mechanism. Active-site charge relay system residues include Asp324 and His356.

The protein belongs to the AB hydrolase superfamily. Homodimer. As to expression, expressed in roots, stems, leaves, petals, stamens and pistils, but not in bulb scales.

The protein localises to the plastid. It localises to the chloroplast. The enzyme catalyses 6-tuliposide A = tulipalin A + D-glucose. Inhibited by NaF, AgNO(3), HgCl(2), CuSO(4) and phenylmethylsulfonyl fluoride (PMSF). In terms of biological role, lactone-forming carboxylesterases, specifically catalyzing intramolecular transesterification, but not hydrolysis. Involved in the biosynthesis of tulipalins, defensive chemicals that show antimicrobial activities against a broad range of strains of bacteria and fungi. Substrates are 6-tuliposide A &gt; 6-tuliposide B. This chain is Tuliposide A-converting enzyme 2, chloroplastic (TCEA2), found in Tulipa gesneriana (Garden tulip).